Reading from the N-terminus, the 314-residue chain is Phospholipid phosphatase-related protein type 5 (314 aa).

6 helical membrane passes run 5 to 25 (FSLT…VMLA), 61 to 81 (IPPV…IIVG), 120 to 140 (FLGI…AGQV), 194 to 214 (AALS…TIKA), 223 to 243 (VLCL…VAEY), and 250 to 270 (VIAG…CVVN).

Belongs to the PA-phosphatase related phosphoesterase family.

Its subcellular location is the cell membrane. Its function is as follows. Induces filopodia formation and promotes neurite growth. This is Phospholipid phosphatase-related protein type 5 from Xenopus laevis (African clawed frog).